The chain runs to 700 residues: AP-1-like transcription factor yap1 (700 aa).

Disordered regions lie at residues 17 to 185 (SPGH…KDLE) and 228 to 296 (MPVN…VSLR). The short motif at 34–41 (MPVPGRDT) is the Bipartite nuclear localization signal element. Residues 47 to 59 (PSVSNGSQPSAHQ) are compositionally biased toward polar residues. The Bipartite nuclear localization signal motif lies at 67-74 (SPTPEMPP). Residues 103–112 (LDDDDDDASD) show a composition bias toward acidic residues. Over residues 127–138 (AGRAAAASASGS) the composition is skewed to low complexity. A compositionally biased stretch (basic and acidic residues) spans 150–185 (GDGKRELSKSERRKEQNRAAQKAFRERREAKVKDLE). One can recognise a bZIP domain in the interval 156-219 (LSKSERRKEQ…KRLQEENVAL (64 aa)). The interval 158–182 (KSERRKEQNRAAQKAFRERREAKVK) is basic motif. Residues 184 to 191 (LEDKVAEL) form a leucine-zipper region. Transcription activation stretches follow at residues 213–400 (QEEN…QPDS) and 452–577 (LGAT…GRGN). The segment covering 231–244 (NSRNSPNSNNGSFS) has biased composition (low complexity). Residues 280-296 (SANTISDNSSESLVSLR) show a composition bias toward polar residues. Residues 306-318 (FSDHFNTYALGVV) form a n-CRD region. Disordered regions lie at residues 320–359 (VPPP…PSAD) and 542–609 (NYLN…KATT). Low complexity-rich tracts occupy residues 335 to 358 (SASN…PPSA) and 542 to 573 (NYLN…NVSS). Polar residues predominate over residues 589–607 (MGSSRTSVSHDSTDLQGKA). The segment at 642 to 675 (PSELWMRFGMQHENSTEHLLIDDLCDQMRAKATC) is c-CRD. The Nuclear export signal motif lies at 660 to 667 (LLIDDLCD). A disulfide bridge links Cys-666 with Cys-675.

It belongs to the bZIP family. YAP subfamily. Depending on the oxidative stress inducing agent, yap1 can undergo two distinct conformational changes, both involving disulfide bond formation, and both masking the nuclear export signal, thus abolishing nuclear export.

Its subcellular location is the nucleus. It localises to the cytoplasm. In terms of biological role, transcription activator involved in oxidative stress response and redox homeostasis. Regulates the transcription of genes encoding antioxidant enzymes and components of the cellular thiol-reducing pathways. Involved in antifungal resistance to fluconazole. The sequence is that of AP-1-like transcription factor yap1 from Cryptococcus neoformans var. grubii serotype A (strain H99 / ATCC 208821 / CBS 10515 / FGSC 9487) (Filobasidiella neoformans var. grubii).